The sequence spans 238 residues: Small ribosomal subunit protein eS4 (238 aa).

Residues L38–I110 form the S4 RNA-binding domain.

This sequence belongs to the eukaryotic ribosomal protein eS4 family.

This is Small ribosomal subunit protein eS4 from Pyrobaculum islandicum (strain DSM 4184 / JCM 9189 / GEO3).